A 425-amino-acid polypeptide reads, in one-letter code: MIEQQFLKQCKEKAYFIEHQRVLLAISGGLDSMTLLNLLYKYQKELDIELILAHINHKQRIEADQEEKQLKEIAQKLGVKILTSSFSGVFSEKSARDFRYNFFKKVMQEEDCTALVTAHHADDQAETIFMRILRGSRLRYLSGMKDRQPFGGGELIRPLLEFSKTDFPTVFHFEDASNFENTYFRNRVRNHYFPLLETENPRIKQAIINLGTEIAQLQKALSDLTKDLNQTDLQTFRKQKREVQVFLLQEYLEKFPDLQLSKAQFDEILHILNTKANYHHYLKNQYELIQDYQTFKIQKIGPKSDSKKDAILLQFEDIIELDNFCFSFGKELVGGVVQMIPVSRKTSIVLRHRQSGDRIVLNGHHKKLARYFIDEKYSLQERDEAIIVEQFNEILGIAGIVTSDLSKNSKRDIMKDILYIKKIDR.

Position 27–32 (27–32 (SGGLDS)) interacts with ATP.

It belongs to the tRNA(Ile)-lysidine synthase family.

The protein localises to the cytoplasm. The catalysed reaction is cytidine(34) in tRNA(Ile2) + L-lysine + ATP = lysidine(34) in tRNA(Ile2) + AMP + diphosphate + H(+). Its function is as follows. Ligates lysine onto the cytidine present at position 34 of the AUA codon-specific tRNA(Ile) that contains the anticodon CAU, in an ATP-dependent manner. Cytidine is converted to lysidine, thus changing the amino acid specificity of the tRNA from methionine to isoleucine. In Streptococcus gordonii (strain Challis / ATCC 35105 / BCRC 15272 / CH1 / DL1 / V288), this protein is tRNA(Ile)-lysidine synthase.